Reading from the N-terminus, the 341-residue chain is L-threonine 3-dehydrogenase (341 aa).

Cys38 contributes to the Zn(2+) binding site. Catalysis depends on charge relay system residues Thr40 and His43. Zn(2+)-binding residues include His63, Glu64, Cys93, Cys96, Cys99, and Cys107. NAD(+) is bound by residues Ile175, Asp195, Arg200, 262 to 264, and 286 to 287; these read LGI and IY.

This sequence belongs to the zinc-containing alcohol dehydrogenase family. In terms of assembly, homotetramer. Requires Zn(2+) as cofactor.

It localises to the cytoplasm. It carries out the reaction L-threonine + NAD(+) = (2S)-2-amino-3-oxobutanoate + NADH + H(+). It functions in the pathway amino-acid degradation; L-threonine degradation via oxydo-reductase pathway; glycine from L-threonine: step 1/2. Catalyzes the NAD(+)-dependent oxidation of L-threonine to 2-amino-3-ketobutyrate. In Edwardsiella ictaluri (strain 93-146), this protein is L-threonine 3-dehydrogenase.